Consider the following 547-residue polypeptide: Glucose-6-phosphate isomerase (547 aa).

Residue Glu354 is the Proton donor of the active site. Catalysis depends on residues His385 and Lys513.

The protein belongs to the GPI family.

The protein localises to the cytoplasm. It catalyses the reaction alpha-D-glucose 6-phosphate = beta-D-fructose 6-phosphate. The protein operates within carbohydrate biosynthesis; gluconeogenesis. Its pathway is carbohydrate degradation; glycolysis; D-glyceraldehyde 3-phosphate and glycerone phosphate from D-glucose: step 2/4. Its function is as follows. Catalyzes the reversible isomerization of glucose-6-phosphate to fructose-6-phosphate. In Endomicrobium trichonymphae, this protein is Glucose-6-phosphate isomerase.